The sequence spans 468 residues: Tissue alpha-L-fucosidase (468 aa).

An N-terminal signal peptide occupies residues 1–29; the sequence is MRAPGERWRPAGAALWLLLLLLLLGATES. T172 is modified (phosphothreonine). N243, N270, and N384 each carry an N-linked (GlcNAc...) asparagine glycan.

This sequence belongs to the glycosyl hydrolase 29 family. Homotetramer.

The protein localises to the lysosome. It catalyses the reaction an alpha-L-fucoside + H2O = L-fucose + an alcohol. The enzyme catalyses a neolactoside IV(2)-alpha-Fuc-nLc4Cer(d18:1(4E)) + H2O = a neolactoside nLc4Cer(d18:1(4E)) + L-fucose. The catalysed reaction is a neolactoside IV(2)-alpha-Fuc-nLc4Cer(d18:0) + H2O = a neolactoside nLc4Cer(d18:0) + L-fucose. Its function is as follows. Alpha-L-fucosidase is responsible for hydrolyzing the alpha-1,6-linked fucose joined to the reducing-end N-acetylglucosamine of the carbohydrate moieties of glycoproteins. This is Tissue alpha-L-fucosidase (FUCA1) from Macaca fascicularis (Crab-eating macaque).